Consider the following 385-residue polypeptide: Leucine aminopeptidase 1 (385 aa).

Residues 1–19 (MKFPSFLSLGIAASTTALA) form the signal peptide. The propeptide occupies 20–87 (ALPDQKPIGD…FPRAFAKTAV (68 aa)). The N-linked (GlcNAc...) asparagine glycan is linked to Asn-177. Zn(2+) is bound by residues His-185 and Asp-204. Asn-229 is a glycosylation site (N-linked (GlcNAc...) asparagine). Glu-243 and Asp-270 together coordinate Zn(2+). A disulfide bridge connects residues Cys-319 and Cys-323. His-352 is a Zn(2+) binding site.

Belongs to the peptidase M28 family. M28E subfamily. Monomer. Zn(2+) is required as a cofactor.

It localises to the secreted. Functionally, extracellular aminopeptidase that allows assimilation of proteinaceous substrates. This Blastomyces gilchristii (strain SLH14081) (Blastomyces dermatitidis) protein is Leucine aminopeptidase 1 (LAP1).